The following is a 545-amino-acid chain: CTP synthase (545 aa).

The tract at residues 1-266 (MTTNYIFVTG…DDLVCARFGI (266 aa)) is amidoligase domain. Serine 14 contributes to the CTP binding site. Serine 14 is a UTP binding site. ATP is bound by residues 15 to 20 (SLGKGI) and aspartate 72. Aspartate 72 and glutamate 140 together coordinate Mg(2+). CTP contacts are provided by residues 147–149 (DIE), 187–192 (KTKPTQ), and lysine 223. UTP is bound by residues 187–192 (KTKPTQ) and lysine 223. Position 239–241 (239–241 (KDV)) interacts with ATP. The Glutamine amidotransferase type-1 domain occupies 291–542 (TIGMVGKYIE…IKAAGENARG (252 aa)). Position 352 (glycine 352) interacts with L-glutamine. Cysteine 379 acts as the Nucleophile; for glutamine hydrolysis in catalysis. L-glutamine-binding positions include 380–383 (LGMQ), glutamate 403, and arginine 470. Residues histidine 515 and glutamate 517 contribute to the active site.

The protein belongs to the CTP synthase family. In terms of assembly, homotetramer.

The catalysed reaction is UTP + L-glutamine + ATP + H2O = CTP + L-glutamate + ADP + phosphate + 2 H(+). It catalyses the reaction L-glutamine + H2O = L-glutamate + NH4(+). It carries out the reaction UTP + NH4(+) + ATP = CTP + ADP + phosphate + 2 H(+). Its pathway is pyrimidine metabolism; CTP biosynthesis via de novo pathway; CTP from UDP: step 2/2. With respect to regulation, allosterically activated by GTP, when glutamine is the substrate; GTP has no effect on the reaction when ammonia is the substrate. The allosteric effector GTP functions by stabilizing the protein conformation that binds the tetrahedral intermediate(s) formed during glutamine hydrolysis. Inhibited by the product CTP, via allosteric rather than competitive inhibition. Catalyzes the ATP-dependent amination of UTP to CTP with either L-glutamine or ammonia as the source of nitrogen. Regulates intracellular CTP levels through interactions with the four ribonucleotide triphosphates. This Vibrio vulnificus (strain CMCP6) protein is CTP synthase.